Here is a 220-residue protein sequence, read N- to C-terminus: MPGGLEALRALPLLLFLSYACLGPGCQALRVEGGPPSLTVNLGEEARLTCENNGRNPNITWWFSLQSNITWPPVPLGPGQGTTGQLFFPEVNKNHRGLYWCQVIENNILKRSCGTYLRVRNPVPRPFLDMGEGTKNRIITAEGIILLFCAVVPGTLLLFRKRWQNEKFGVDMPDDYEDENLYEGLNLDDCSMYEDISRGLQGTYQDVGNLHIGDAQLEKP.

The signal sequence occupies residues 1–28; it reads MPGGLEALRALPLLLFLSYACLGPGCQA. Residues 29–117 form the Ig-like C2-type domain; the sequence is LRVEGGPPSL…ILKRSCGTYL (89 aa). Residues 29–137 lie on the Extracellular side of the membrane; that stretch reads LRVEGGPPSL…LDMGEGTKNR (109 aa). Cysteine 50 and cysteine 101 are disulfide-bonded. Residues asparagine 58 and asparagine 68 are each glycosylated (N-linked (GlcNAc...) asparagine). Residues 138-159 form a helical membrane-spanning segment; it reads IITAEGIILLFCAVVPGTLLLF. Residues 160-220 lie on the Cytoplasmic side of the membrane; the sequence is RKRWQNEKFG…HIGDAQLEKP (61 aa). Residues 171 to 199 form the ITAM domain; that stretch reads DMPDDYEDENLYEGLNLDDCSMYEDISRG. Tyrosine 182 and tyrosine 193 each carry phosphotyrosine; by SRC-type Tyr-kinases. Arginine 198 bears the Asymmetric dimethylarginine; by PRMT1 mark. Position 204 is a phosphotyrosine; by Tyr-kinases (tyrosine 204).

In terms of assembly, heterodimer of alpha and beta chains; disulfide-linked. Part of the B-cell antigen receptor complex where the alpha/beta chain heterodimer is non-covalently associated with an antigen-specific membrane-bound surface immunoglobulin of two heavy chains and two light chains. Interacts through its phosphorylated ITAM domain with the SH2 domains of SYK which stimulates SYK autophosphorylation and activation. Also interacts, when phosphorylated on Tyr-204, with the SH2 domain of BLNK/SLP65, bringing BLNK into proximity with SYK and allowing SYK to phosphorylate BLNK which is necessary for trafficking of the BCR to late endosomes. Interacts with Src-family tyrosine kinases including FYN and LYN, increasing their activity. Post-translationally, phosphorylated on tyrosine, serine and threonine residues upon B-cell activation. Phosphorylation of tyrosine residues by Src-family kinases, including LYN, is an early and essential feature of the BCR signaling cascade. The phosphorylated tyrosines serve as docking sites for SH2-domain containing kinases, leading to their activation which in turn leads to phosphorylation of downstream targets. Phosphorylation of serine and threonine residues may prevent subsequent tyrosine phosphorylation. In terms of processing, arginine methylation in the ITAM domain may interfere with the binding of SYK. It promotes signals leading to B-cell differentiation. B-cells.

It is found in the cell membrane. Functionally, required in cooperation with CD79B for initiation of the signal transduction cascade activated by binding of antigen to the B-cell antigen receptor complex (BCR) which leads to internalization of the complex, trafficking to late endosomes and antigen presentation. Also required for BCR surface expression and for efficient differentiation of pro- and pre-B-cells. Stimulates SYK autophosphorylation and activation. Binds to BLNK, bringing BLNK into proximity with SYK and allowing SYK to phosphorylate BLNK. Also interacts with and increases activity of some Src-family tyrosine kinases. Represses BCR signaling during development of immature B-cells. This Mus musculus (Mouse) protein is B-cell antigen receptor complex-associated protein alpha chain (Cd79a).